The primary structure comprises 154 residues: Large ribosomal subunit protein uL13 (154 aa).

Belongs to the universal ribosomal protein uL13 family. In terms of assembly, part of the 50S ribosomal subunit.

Its function is as follows. This protein is one of the early assembly proteins of the 50S ribosomal subunit, although it is not seen to bind rRNA by itself. It is important during the early stages of 50S assembly. This is Large ribosomal subunit protein uL13 from Rhizobium leguminosarum bv. trifolii (strain WSM2304).